Here is a 77-residue protein sequence, read N- to C-terminus: Exodeoxyribonuclease 7 small subunit (77 aa).

The protein belongs to the XseB family. In terms of assembly, heterooligomer composed of large and small subunits.

It localises to the cytoplasm. It carries out the reaction Exonucleolytic cleavage in either 5'- to 3'- or 3'- to 5'-direction to yield nucleoside 5'-phosphates.. Functionally, bidirectionally degrades single-stranded DNA into large acid-insoluble oligonucleotides, which are then degraded further into small acid-soluble oligonucleotides. The chain is Exodeoxyribonuclease 7 small subunit from Trichlorobacter lovleyi (strain ATCC BAA-1151 / DSM 17278 / SZ) (Geobacter lovleyi).